We begin with the raw amino-acid sequence, 136 residues long: Group 1 truncated hemoglobin GlbN (136 aa).

Heme is bound at residue H81.

The protein belongs to the truncated hemoglobin family. Group I subfamily. Homodimer. Heme is required as a cofactor.

Functionally, binds oxygen cooperatively with very high affinity because of a fast combination and a slow dissociation rate. The polypeptide is Group 1 truncated hemoglobin GlbN (glbN) (Mycolicibacterium paratuberculosis (strain ATCC BAA-968 / K-10) (Mycobacterium paratuberculosis)).